The primary structure comprises 185 residues: Shikimate kinase (185 aa).

Position 15 to 20 (15 to 20 (GAGKST)) interacts with ATP. A Mg(2+)-binding site is contributed by Ser19. Asp37, Arg61, and Gly83 together coordinate substrate. Residue Arg121 participates in ATP binding. Arg146 contacts substrate.

The protein belongs to the shikimate kinase family. As to quaternary structure, monomer. Requires Mg(2+) as cofactor.

Its subcellular location is the cytoplasm. It carries out the reaction shikimate + ATP = 3-phosphoshikimate + ADP + H(+). It participates in metabolic intermediate biosynthesis; chorismate biosynthesis; chorismate from D-erythrose 4-phosphate and phosphoenolpyruvate: step 5/7. In terms of biological role, catalyzes the specific phosphorylation of the 3-hydroxyl group of shikimic acid using ATP as a cosubstrate. The sequence is that of Shikimate kinase from Blochmanniella floridana.